Reading from the N-terminus, the 313-residue chain is MKEKIVIALGGNAIQTKEATAEAQQTAIRRAMQNLKPLFDSPARIVISHGNGPQIGSLLIQQAKSNSDTTPAMPLDTCGAMSQGMIGYWLETEINRILTEMNSDRTVGTIVTRVEVDKDDPRFNNPTKPIGPFYTKEEVEELQKEQPDSVFKEDAGRGYRKVVASPLPQSILEHQLIRTLADGKNIVIACGGGGIPVIKKENTYEGVEAVIDKDFASEKLATLIEADTLMILTNVENVFINFNEPNQQQIDDIDVATLKKYAAQGKFAEGSMLPKIEAAIRFVESGENKKVIITNLEQAYEALIGNKGTHIHM.

The protein belongs to the carbamate kinase family.

The protein localises to the cytoplasm. It carries out the reaction hydrogencarbonate + NH4(+) + ATP = carbamoyl phosphate + ADP + H2O + H(+). Its pathway is metabolic intermediate metabolism; carbamoyl phosphate degradation; CO(2) and NH(3) from carbamoyl phosphate: step 1/1. This Staphylococcus aureus (strain Mu50 / ATCC 700699) protein is Carbamate kinase 2 (arcC2).